Consider the following 367-residue polypeptide: Outer membrane porin C (367 aa).

An N-terminal signal peptide occupies residues 1–21; it reads MKVKVLSLLVPALLVAGAANA. Residues 22-33 are Periplasmic-facing; that stretch reads AEVYNKDGNKLD. The beta stranded transmembrane segment at 34 to 42 threads the bilayer; sequence LYGKVDGLH. Topologically, residues 43–53 are extracellular; the sequence is YFSDNKDVDGD. A beta stranded membrane pass occupies residues 54-63; the sequence is QTYMRLGFKG. Over 64-73 the chain is Periplasmic; it reads ETQVTDQLTG. The chain crosses the membrane as a beta stranded span at residues 74-84; the sequence is YGQWEYQIQGN. The Extracellular segment spans residues 85–91; sequence SAENENN. A beta stranded membrane pass occupies residues 92 to 101; the sequence is SWTRVAFAGL. The Periplasmic segment spans residues 102-106; that stretch reads KFQDV. The beta stranded transmembrane segment at 107–115 threads the bilayer; it reads GSFDYGRNY. Positions 116–133 are loop L3; may constrict the pore; it reads GVVYDVTSWTDVLPEFGG. At 116–141 the chain is on the extracellular side; it reads GVVYDVTSWTDVLPEFGGDTYGSDNF. A beta stranded transmembrane segment spans residues 142-154; that stretch reads MQQRGNGFATYRN. Residues 155-163 are Periplasmic-facing; it reads TDFFGLVDG. A beta stranded transmembrane segment spans residues 164 to 171; that stretch reads LNFAVQYQ. At 172–200 the chain is on the extracellular side; sequence GKNGNPSGEGFTSGVTNNGRDALRQNGDG. The beta stranded transmembrane segment at 201 to 207 threads the bilayer; that stretch reads VGGSITY. Over 208-211 the chain is Periplasmic; sequence DYEG. A beta stranded membrane pass occupies residues 212–219; the sequence is FGIGGAIS. Residues 220-241 lie on the Extracellular side of the membrane; sequence SSKRTDAQNTAAYIGNGDRAET. A beta stranded transmembrane segment spans residues 242-248; it reads YTGGLKY. Residues 249-252 lie on the Periplasmic side of the membrane; sequence DANN. Residues 253–260 form a beta stranded membrane-spanning segment; sequence IYLAAQYT. The Extracellular segment spans residues 261 to 269; the sequence is QTYNATRVG. Residues 270–286 traverse the membrane as a beta stranded segment; the sequence is SLGWANKAQNFEAVAQY. The Periplasmic segment spans residues 287 to 291; that stretch reads QFDFG. Residues 292–299 traverse the membrane as a beta stranded segment; the sequence is LRPSLAYL. At 300–318 the chain is on the extracellular side; sequence QSKGKNLGRGYDDEDILKY. A beta stranded membrane pass occupies residues 319–326; that stretch reads VDVGATYY. Residues 327–330 lie on the Periplasmic side of the membrane; the sequence is FNKN. Residues 331-338 traverse the membrane as a beta stranded segment; the sequence is MSTYVDYK. Topologically, residues 339-358 are extracellular; the sequence is INLLDDNQFTRDAGINTDNI. Residues Asn340, Leu342, and Thr355 each coordinate Mg(2+). Residues 359-366 form a beta stranded membrane-spanning segment; that stretch reads VALGLVYQ. Residue Phe367 is a topological domain, periplasmic.

Belongs to the Gram-negative porin family. As to quaternary structure, homotrimer. Forms mixed heterotrimers with OmpF and with PhoE; other mixed heterotrimers are also probable.

Its subcellular location is the cell outer membrane. Its function is as follows. Forms pores that allow passive diffusion of small molecules across the outer membrane. (Microbial infection) Supports colicin E5 entry in the absence of its major receptor OmpF. In terms of biological role, (Microbial infection) A mixed OmpC-OmpF heterotrimer is the outer membrane receptor for toxin CdiA-EC536; polymorphisms in extracellular loops 4 and 5 of OmpC confer susceptibility to CdiA-EC536-mediated toxicity. The sequence is that of Outer membrane porin C (ompC) from Escherichia coli (strain K12).